We begin with the raw amino-acid sequence, 370 residues long: MSTKELYIGVMSGTSMDGVDCALVEFDQEQVRLIAHSDYPMPADLRQKLLSVCTGQATNLKQIGELDHRLGHLFADAVMDLLSQAGVDTSQIRAIGNHGQTVFHQPNGEFPFTTQLGDANIIATRTNIDTVADFRRKDMALGGQGAPLVPAFHQSVFALQDSTTVVLNIGGIANISVLHPTRPVLGYDTGPGNMLMDAWCETHTQQNYDKDARFALQGEVNEALLNTLLQEPYLHQDAPKSTGRELFNMEWLTAKLQGQNYRSEDVQRTLCEYTALTISKEVERFRYGPTPQLLVCGGGARNPLLMQRLQQQLSHWQVSTTDAKGVSGDYMEAMAFAWLAYRHLHRLPSNLPEVTGASRLASLGVLYSKA.

13–20 (GTSMDGVD) serves as a coordination point for ATP.

This sequence belongs to the anhydro-N-acetylmuramic acid kinase family.

The enzyme catalyses 1,6-anhydro-N-acetyl-beta-muramate + ATP + H2O = N-acetyl-D-muramate 6-phosphate + ADP + H(+). Its pathway is amino-sugar metabolism; 1,6-anhydro-N-acetylmuramate degradation. It participates in cell wall biogenesis; peptidoglycan recycling. Functionally, catalyzes the specific phosphorylation of 1,6-anhydro-N-acetylmuramic acid (anhMurNAc) with the simultaneous cleavage of the 1,6-anhydro ring, generating MurNAc-6-P. Is required for the utilization of anhMurNAc either imported from the medium or derived from its own cell wall murein, and thus plays a role in cell wall recycling. The polypeptide is Anhydro-N-acetylmuramic acid kinase (Vibrio vulnificus (strain CMCP6)).